A 555-amino-acid chain; its full sequence is CTP synthase (555 aa).

An amidoligase domain region spans residues M1–I271. A CTP-binding site is contributed by S19. S19 is a binding site for UTP. ATP contacts are provided by residues S20 to L25 and D77. Residues D77 and E145 each coordinate Mg(2+). CTP-binding positions include D152–E154, K192–Q197, and K228. UTP-binding positions include K192 to Q197 and K228. One can recognise a Glutamine amidotransferase type-1 domain in the interval R297–A537. G358 is an L-glutamine binding site. The Nucleophile; for glutamine hydrolysis role is filled by C385. L-glutamine contacts are provided by residues L386 to Q389, E409, and R466. Active-site residues include H510 and E512. A disordered region spans residues D536–G555.

This sequence belongs to the CTP synthase family. As to quaternary structure, homotetramer.

It carries out the reaction UTP + L-glutamine + ATP + H2O = CTP + L-glutamate + ADP + phosphate + 2 H(+). It catalyses the reaction L-glutamine + H2O = L-glutamate + NH4(+). The catalysed reaction is UTP + NH4(+) + ATP = CTP + ADP + phosphate + 2 H(+). The protein operates within pyrimidine metabolism; CTP biosynthesis via de novo pathway; CTP from UDP: step 2/2. Allosterically activated by GTP, when glutamine is the substrate; GTP has no effect on the reaction when ammonia is the substrate. The allosteric effector GTP functions by stabilizing the protein conformation that binds the tetrahedral intermediate(s) formed during glutamine hydrolysis. Inhibited by the product CTP, via allosteric rather than competitive inhibition. Its function is as follows. Catalyzes the ATP-dependent amination of UTP to CTP with either L-glutamine or ammonia as the source of nitrogen. Regulates intracellular CTP levels through interactions with the four ribonucleotide triphosphates. This is CTP synthase from Anaeromyxobacter dehalogenans (strain 2CP-C).